We begin with the raw amino-acid sequence, 248 residues long: Large ribosomal subunit protein uL2 (248 aa).

The tract at residues Ala203–Gln248 is disordered. Over residues Lys227–Ala242 the composition is skewed to basic residues.

It belongs to the universal ribosomal protein uL2 family. Part of the 50S ribosomal subunit. Forms a bridge to the 30S subunit in the 70S ribosome.

Functionally, one of the primary rRNA binding proteins. Required for association of the 30S and 50S subunits to form the 70S ribosome, for tRNA binding and peptide bond formation. It has been suggested to have peptidyltransferase activity; this is somewhat controversial. Makes several contacts with the 16S rRNA in the 70S ribosome. This Thermofilum pendens (strain DSM 2475 / Hrk 5) protein is Large ribosomal subunit protein uL2.